Consider the following 515-residue polypeptide: 3,4-dehydroadipyl-CoA semialdehyde dehydrogenase (515 aa).

Catalysis depends on residues glutamate 255 and cysteine 294. The tract at residues 470 to 515 (VMPTCLHGGPRARRRRRGVGRSARAGDVSPPLRRAGRPRGAGSPVA) is disordered. The span at 479-488 (PRARRRRRGV) shows a compositional bias: basic residues. A compositionally biased stretch (low complexity) spans 489–515 (GRSARAGDVSPPLRRAGRPRGAGSPVA).

The protein belongs to the aldehyde dehydrogenase family. Homodimer.

It carries out the reaction (3Z)-6-oxohex-3-enoyl-CoA + NADP(+) + H2O = cis-3,4-dehydroadipyl-CoA + NADPH + 2 H(+). In terms of biological role, catalyzes the NADP-dependent oxidation of 3,4-dehydroadipyl-CoA semialdehyde to form cis-3,4-dehydroadipyl-CoA. This Aromatoleum evansii (Azoarcus evansii) protein is 3,4-dehydroadipyl-CoA semialdehyde dehydrogenase (boxD).